The following is a 635-amino-acid chain: Sodium- and chloride-dependent creatine transporter 1 (635 aa).

Residues 1-35 form a disordered region; that stretch reads MAKKSAENGIYSVSGDEKKGPLIAPGPDGAPAKGD. The Cytoplasmic portion of the chain corresponds to 1-60; sequence MAKKSAENGIYSVSGDEKKGPLIAPGPDGAPAKGDGPAGLGAPGGCLAVPPRETWTRQMD. A compositionally biased stretch (low complexity) spans 25–35; that stretch reads PGPDGAPAKGD. The helical transmembrane segment at 61 to 81 threads the bilayer; the sequence is FIMSCVGFAVGLGNVWRFPYL. Over 82–87 the chain is Extracellular; the sequence is CYKNGG. A helical membrane pass occupies residues 88 to 108; the sequence is GVFLIPYVLIALVGGIPIFFL. Residues 109–138 lie on the Cytoplasmic side of the membrane; that stretch reads EISLGQFMKAGSINVWNICPLFKGLGYASM. A helical transmembrane segment spans residues 139-159; that stretch reads VIVFYCNTYYIMVLAWGFYYL. Over 160 to 230 the chain is Extracellular; it reads VKSFTTTLPW…LSGGLEVPGA (71 aa). Residues asparagine 192 and asparagine 197 are each glycosylated (N-linked (GlcNAc...) asparagine). Residues 231 to 251 traverse the membrane as a helical segment; it reads LNSEVTLCLLACWVLVYFCVW. Residues 252–269 are Cytoplasmic-facing; it reads KGVKSTGKIVYFTATFPY. A helical transmembrane segment spans residues 270–290; it reads VVLVVLLVRGVLLPGALDGII. Residues 291 to 304 are Extracellular-facing; sequence YYLKPDWSKLRSPQ. Residues 305-325 traverse the membrane as a helical segment; the sequence is VWIDAGTQIFFSYAIGLGALT. The Cytoplasmic segment spans residues 326–341; the sequence is ALGSYNRFNNNCYKDA. The chain crosses the membrane as a helical span at residues 342 to 362; that stretch reads IILALINSGTSFFAGFVVFSI. At 363 to 394 the chain is on the extracellular side; the sequence is LGFMATEQGVHISKVAESGPGLAFIAYPRAVT. A helical membrane pass occupies residues 395-415; the sequence is LMPVAPLWAALFFFMLLLLGL. The Cytoplasmic portion of the chain corresponds to 416–444; the sequence is DSQFVGVEGFITGLLDLLPASYYFRFQRE. Residues 445 to 465 traverse the membrane as a helical segment; it reads ISVALCCALCFVIDLSMVQMA. Residues 466-479 lie on the Extracellular side of the membrane; the sequence is GMYVFQLFDYYSAS. The chain crosses the membrane as a helical span at residues 480-500; that stretch reads GTTLLWQAFWECVAVAWVYGA. Over 501 to 520 the chain is Cytoplasmic; sequence DRFMDDIACMIGYRPCPWMK. The chain crosses the membrane as a helical span at residues 521–541; the sequence is WCWSFFTPLVCMGIFIFNIVY. Residues 542–560 are Extracellular-facing; it reads YKPLVYNKTYVYPWWGEAM. The N-linked (GlcNAc...) asparagine glycan is linked to asparagine 548. Residues 561 to 581 traverse the membrane as a helical segment; that stretch reads GWAFALSSMLCVPLHLLGCLL. Residues 582–635 lie on the Cytoplasmic side of the membrane; sequence RAKGTMAERWQHLTQPVWGLHHLEYRAQDADVRGLTTLTPVSESSKVVVVESVM. Residues threonine 617 and threonine 620 each carry the phosphothreonine modification. Phosphoserine is present on serine 623.

Belongs to the sodium:neurotransmitter symporter (SNF) (TC 2.A.22) family. SLC6A8 subfamily. Glycosylated. Prominent in kidney, heart, and muscle, also present in brain, but not in liver and intestine.

Its subcellular location is the cell membrane. It localises to the apical cell membrane. It catalyses the reaction creatine(out) + chloride(out) + 2 Na(+)(out) = creatine(in) + chloride(in) + 2 Na(+)(in). In terms of biological role, creatine:sodium symporter which mediates the uptake of creatine. Plays an important role in supplying creatine to the brain via the blood-brain barrier. In Oryctolagus cuniculus (Rabbit), this protein is Sodium- and chloride-dependent creatine transporter 1 (SLC6A8).